A 194-amino-acid polypeptide reads, in one-letter code: Auxin-induced protein 22A (194 aa).

The EAR-like (transcriptional repression) motif lies at 13 to 17 (LRLGL). The tract at residues 40–62 (EIDDVGDENSSSGGGGDRKMENK) is disordered. In terms of domain architecture, PB1 spans 85–173 (KMYVKVSMDG…KRLRIMKRAD (89 aa)).

It belongs to the Aux/IAA family. In terms of assembly, homodimers and heterodimers.

The protein resides in the nucleus. Its function is as follows. Aux/IAA proteins are short-lived transcriptional factors that function as repressors of early auxin response genes at low auxin concentrations. Repression is thought to result from the interaction with auxin response factors (ARFs), proteins that bind to the auxin-responsive promoter element (AuxRE). Formation of heterodimers with ARF proteins may alter their ability to modulate early auxin response genes expression. The chain is Auxin-induced protein 22A (AUX22A) from Vigna radiata var. radiata (Mung bean).